A 201-amino-acid polypeptide reads, in one-letter code: uncharacterized protein (201 aa).

Residues 121 to 141 (HHRTRPGRGPGPRPGGSAMAG) form a disordered region.

This is an uncharacterized protein from Mycobacterium tuberculosis (strain ATCC 25618 / H37Rv).